A 399-amino-acid polypeptide reads, in one-letter code: Elongation factor Tu (399 aa).

The tr-type G domain occupies 10 to 204 (KPHVNIGTIG…AVDANIPEPE (195 aa)). The interval 19–26 (GHVDHGKT) is G1. 19–26 (GHVDHGKT) provides a ligand contact to GTP. Residue Thr26 coordinates Mg(2+). The tract at residues 60–64 (GITIN) is G2. The interval 81–84 (DCPG) is G3. Residues 81-85 (DCPGH) and 136-139 (NKCD) each bind GTP. Residues 136-139 (NKCD) form a G4 region. The tract at residues 174–176 (SGL) is G5.

Belongs to the TRAFAC class translation factor GTPase superfamily. Classic translation factor GTPase family. EF-Tu/EF-1A subfamily. Monomer.

The protein localises to the cytoplasm. The enzyme catalyses GTP + H2O = GDP + phosphate + H(+). GTP hydrolase that promotes the GTP-dependent binding of aminoacyl-tRNA to the A-site of ribosomes during protein biosynthesis. The sequence is that of Elongation factor Tu from Synechococcus sp. (strain WH7803).